The following is a 114-amino-acid chain: T cell receptor beta variable 6-1 (114 aa).

The N-terminal stretch at 1–21 is a signal peptide; it reads MSIGLLCCVAFSLLWASPVNA. The region spanning 22–114 is the Ig-like domain; that stretch reads GVTQTPKFQV…TSVYFCASSE (93 aa). Cys-42 and Cys-110 are joined by a disulfide. Asn-84 carries an N-linked (GlcNAc...) asparagine glycan.

In terms of assembly, alpha-beta TR is a heterodimer composed of an alpha and beta chain; disulfide-linked. The alpha-beta TR is associated with the transmembrane signaling CD3 coreceptor proteins to form the TR-CD3 (TcR or TCR). The assembly of alpha-beta TR heterodimers with CD3 occurs in the endoplasmic reticulum where a single alpha-beta TR heterodimer associates with one CD3D-CD3E heterodimer, one CD3G-CD3E heterodimer and one CD247 homodimer forming a stable octameric structure. CD3D-CD3E and CD3G-CD3E heterodimers preferentially associate with TR alpha and TR beta chains, respectively. The association of the CD247 homodimer is the last step of TcR assembly in the endoplasmic reticulum and is required for transport to the cell surface.

Its subcellular location is the cell membrane. Functionally, v region of the variable domain of T cell receptor (TR) beta chain that participates in the antigen recognition. Alpha-beta T cell receptors are antigen specific receptors which are essential to the immune response and are present on the cell surface of T lymphocytes. Recognize peptide-major histocompatibility (MH) (pMH) complexes that are displayed by antigen presenting cells (APC), a prerequisite for efficient T cell adaptive immunity against pathogens. Binding of alpha-beta TR to pMH complex initiates TR-CD3 clustering on the cell surface and intracellular activation of LCK that phosphorylates the ITAM motifs of CD3G, CD3D, CD3E and CD247 enabling the recruitment of ZAP70. In turn ZAP70 phosphorylates LAT, which recruits numerous signaling molecules to form the LAT signalosome. The LAT signalosome propagates signal branching to three major signaling pathways, the calcium, the mitogen-activated protein kinase (MAPK) kinase and the nuclear factor NF-kappa-B (NF-kB) pathways, leading to the mobilization of transcription factors that are critical for gene expression and essential for T cell growth and differentiation. The T cell repertoire is generated in the thymus, by V-(D)-J rearrangement. This repertoire is then shaped by intrathymic selection events to generate a peripheral T cell pool of self-MH restricted, non-autoaggressive T cells. Post-thymic interaction of alpha-beta TR with the pMH complexes shapes TR structural and functional avidity. The protein is T cell receptor beta variable 6-1 of Homo sapiens (Human).